A 273-amino-acid polypeptide reads, in one-letter code: NH(3)-dependent NAD(+) synthetase (273 aa).

47–54 (GISGGQDS) serves as a coordination point for ATP. Residue D53 coordinates Mg(2+). Deamido-NAD(+) is bound at residue R139. T159 contributes to the ATP binding site. E164 lines the Mg(2+) pocket. The deamido-NAD(+) site is built by K172 and D179. K188 and T210 together coordinate ATP. 259–260 (HK) lines the deamido-NAD(+) pocket.

Belongs to the NAD synthetase family. In terms of assembly, homodimer.

It catalyses the reaction deamido-NAD(+) + NH4(+) + ATP = AMP + diphosphate + NAD(+) + H(+). It participates in cofactor biosynthesis; NAD(+) biosynthesis; NAD(+) from deamido-NAD(+) (ammonia route): step 1/1. Catalyzes the ATP-dependent amidation of deamido-NAD to form NAD. Uses ammonia as a nitrogen source. The polypeptide is NH(3)-dependent NAD(+) synthetase (Staphylococcus saprophyticus subsp. saprophyticus (strain ATCC 15305 / DSM 20229 / NCIMB 8711 / NCTC 7292 / S-41)).